The chain runs to 734 residues: Cullin-4 (734 aa).

In terms of domain architecture, Cullin neddylation spans 666–728 (DRQFELQASI…KEYLEREDND (63 aa)). Residue K680 forms a Glycyl lysine isopeptide (Lys-Gly) (interchain with G-Cter in NEDD8) linkage.

It belongs to the cullin family. In terms of assembly, component of the Clr4 methyltransferase complex (ClrC) composed of at least clr4, rik1, pcu4, rbx1, raf1 and raf2. The cullin pcu4, rik1, raf1, raf2 and the ring-box protein rbx1 are components of an E3 ubiquitin ligase, whose activity is essential for heterochromatin assembly. Post-translationally, neddylated; enhancing the ubiquitin-ligase activity.

It localises to the cytoplasm. Its subcellular location is the nucleus. It is found in the chromosome. It participates in protein modification; protein ubiquitination. Its function is as follows. Required, indirectly, for activation of ribonucleotide reductase through the degradation of the protein spd1, thereby supplying deoxyribonucleotides for DNA replication and repair. Also has a role as a scaffold for assembling ubiquitin ligases. Component of the Clr4 methyltransferase complex (ClrC) which contributes to the establishment of heterochromatin by specifically methylating histone H3 to form H3K9me. ClrC preferentially ubiquitylates H3K14 and ClrC-mediated H3 ubiquitination promotes clr4 methyltransferase activity for the methylation of H3K9. H3K9me represents a specific tag for epigenetic transcriptional repression by recruiting swi6/HP1 to methylated histones which leads to transcriptional silencing within centromeric heterochromatin, telomeric regions and at the silent mating-type loci. This Schizosaccharomyces pombe (strain 972 / ATCC 24843) (Fission yeast) protein is Cullin-4 (pcu4).